Reading from the N-terminus, the 630-residue chain is Golgin subfamily A member 8K (630 aa).

Residues Met1–Glu76 are disordered. Coiled-coil stretches lie at residues Leu86–Asp148 and Leu224–Gln411. Residues Lys352–Lys362 are compositionally biased toward basic and acidic residues. Disordered stretches follow at residues Lys352–Asn379 and Gly424–Ser444.

This sequence belongs to the GOLGA8 family.

The chain is Golgin subfamily A member 8K from Homo sapiens (Human).